The sequence spans 173 residues: Nicotinamide-nucleotide adenylyltransferase (173 aa).

It belongs to the archaeal NMN adenylyltransferase family.

Its subcellular location is the cytoplasm. It carries out the reaction beta-nicotinamide D-ribonucleotide + ATP + H(+) = diphosphate + NAD(+). It participates in cofactor biosynthesis; NAD(+) biosynthesis; NAD(+) from nicotinamide D-ribonucleotide: step 1/1. The chain is Nicotinamide-nucleotide adenylyltransferase from Methanosarcina acetivorans (strain ATCC 35395 / DSM 2834 / JCM 12185 / C2A).